Consider the following 343-residue polypeptide: Phosphate acyltransferase (343 aa).

It belongs to the PlsX family. Homodimer. Probably interacts with PlsY.

Its subcellular location is the cytoplasm. The catalysed reaction is a fatty acyl-[ACP] + phosphate = an acyl phosphate + holo-[ACP]. The protein operates within lipid metabolism; phospholipid metabolism. Its function is as follows. Catalyzes the reversible formation of acyl-phosphate (acyl-PO(4)) from acyl-[acyl-carrier-protein] (acyl-ACP). This enzyme utilizes acyl-ACP as fatty acyl donor, but not acyl-CoA. The protein is Phosphate acyltransferase of Acidovorax sp. (strain JS42).